The chain runs to 355 residues: 45 kDa calcium-binding protein (355 aa).

Residues 1-29 (MASRQGPLCGLAPCCLWLLGVILLMNASA) form the signal peptide. Asn-26 is a glycosylation site (N-linked (GlcNAc...) asparagine). EF-hand domains lie at 91–126 (KSRR…KTAE) and 130–165 (EAVA…TKGH). A Phosphoserine modification is found at Ser-92. Residues Asp-104, Asn-106, Asp-108, Arg-110, Glu-115, Asp-143, Asp-145, Asp-147, His-149, and Glu-154 each coordinate Ca(2+). Phosphothreonine is present on residues Thr-186 and Thr-210. EF-hand domains are found at residues 226–261 (MLQF…TVEN), 271–306 (WVRD…MNEF), and 307–342 (SALN…FTGS). Ca(2+) contacts are provided by Asp-239, Asp-241, Asp-243, Lys-245, and Glu-250. Thr-258 carries the post-translational modification Phosphothreonine. Residues Asp-284, Asn-286, and Asp-288 each contribute to the Ca(2+) site. Thr-292 is subject to Phosphothreonine. Glu-295, Asp-320, Asn-322, Asn-324, Tyr-326, and Glu-331 together coordinate Ca(2+). The segment at 302 to 355 (PMNEFSALNEAKQMIAIADENQNHYLEPEEVLKYSEFFTGSKLVDYARSVHEEF) is necessary for intracellular retention in Golgi apparatus lumen.

This sequence belongs to the CREC family.

The protein resides in the golgi apparatus lumen. Functionally, may regulate calcium-dependent activities in the endoplasmic reticulum lumen or post-ER compartment. The sequence is that of 45 kDa calcium-binding protein (SDF4) from Capra hircus (Goat).